A 191-amino-acid chain; its full sequence is Large ribosomal subunit protein eL15 (191 aa).

The protein belongs to the eukaryotic ribosomal protein eL15 family.

The chain is Large ribosomal subunit protein eL15 (rpl15e) from Pyrobaculum aerophilum (strain ATCC 51768 / DSM 7523 / JCM 9630 / CIP 104966 / NBRC 100827 / IM2).